The sequence spans 249 residues: Cell division protein DivIB (249 aa).

The Cytoplasmic portion of the chain corresponds to Met1–Arg19. Residues Ile20–Tyr40 form a helical membrane-spanning segment. The 69-residue stretch at Phe41 to Arg109 folds into the POTRA domain. At Phe41–Gln249 the chain is on the extracellular side.

It belongs to the FtsQ/DivIB family. DivIB subfamily.

It is found in the cell membrane. Functionally, cell division protein that may be involved in stabilizing or promoting the assembly of the division complex. This is Cell division protein DivIB from Clostridium acetobutylicum (strain ATCC 824 / DSM 792 / JCM 1419 / IAM 19013 / LMG 5710 / NBRC 13948 / NRRL B-527 / VKM B-1787 / 2291 / W).